Consider the following 400-residue polypeptide: Argininosuccinate synthase (400 aa).

ATP-binding positions include 10–18 (AYSGGVDTS) and Ala38. Position 89 (Tyr89) interacts with L-citrulline. Position 119 (Gly119) interacts with ATP. L-aspartate is bound by residues Thr121, Asn125, and Asp126. An L-citrulline-binding site is contributed by Asn125. Arg129, Ser177, Ser186, Glu262, and Tyr274 together coordinate L-citrulline.

It belongs to the argininosuccinate synthase family. Type 1 subfamily. In terms of assembly, homotetramer.

Its subcellular location is the cytoplasm. It carries out the reaction L-citrulline + L-aspartate + ATP = 2-(N(omega)-L-arginino)succinate + AMP + diphosphate + H(+). It participates in amino-acid biosynthesis; L-arginine biosynthesis; L-arginine from L-ornithine and carbamoyl phosphate: step 2/3. The sequence is that of Argininosuccinate synthase from Synechococcus elongatus (strain ATCC 33912 / PCC 7942 / FACHB-805) (Anacystis nidulans R2).